A 72-amino-acid chain; its full sequence is Large ribosomal subunit protein uL29 (72 aa).

This sequence belongs to the universal ribosomal protein uL29 family.

This chain is Large ribosomal subunit protein uL29, found in Caldicellulosiruptor saccharolyticus (strain ATCC 43494 / DSM 8903 / Tp8T 6331).